The primary structure comprises 257 residues: Snake venom serine protease KN3 (257 aa).

Positions 1–18 (MVLIRVLANLLILQLSYA) are cleaved as a signal peptide. A propeptide spanning residues 19 to 24 (QKSSKL) is cleaved from the precursor. One can recognise a Peptidase S1 domain in the interval 25–248 (VVGGDECNIN…HLDWIKSIIA (224 aa)). 6 disulfide bridges follow: Cys31/Cys162, Cys49/Cys65, Cys97/Cys255, Cys141/Cys209, Cys173/Cys188, and Cys199/Cys224. Active-site charge relay system residues include His64 and Asp109. 3 N-linked (GlcNAc...) asparagine glycosylation sites follow: Asn120, Asn121, and Asn164. Residue Ser203 is the Charge relay system of the active site.

This sequence belongs to the peptidase S1 family. Snake venom subfamily. In terms of assembly, monomer. As to expression, expressed by the venom gland.

It localises to the secreted. Its function is as follows. Snake venom serine protease that may act in the hemostasis system of the prey. The chain is Snake venom serine protease KN3 from Trimeresurus stejnegeri (Chinese green tree viper).